A 149-amino-acid chain; its full sequence is Nucleoside diphosphate kinase 1 (149 aa).

ATP contacts are provided by K10, F58, R86, T92, R103, and N113. H116 serves as the catalytic Pros-phosphohistidine intermediate.

The protein belongs to the NDK family. It depends on Mg(2+) as a cofactor.

It catalyses the reaction a 2'-deoxyribonucleoside 5'-diphosphate + ATP = a 2'-deoxyribonucleoside 5'-triphosphate + ADP. The catalysed reaction is a ribonucleoside 5'-diphosphate + ATP = a ribonucleoside 5'-triphosphate + ADP. Major role in the synthesis of nucleoside triphosphates other than ATP. The ATP gamma phosphate is transferred to the NDP beta phosphate via a ping-pong mechanism, using a phosphorylated active-site intermediate. This NDK is microtubule-associated. This Pisum sativum (Garden pea) protein is Nucleoside diphosphate kinase 1 (NDPK1).